Here is a 274-residue protein sequence, read N- to C-terminus: Large ribosomal subunit protein uL2 (274 aa).

The tract at residues 224–254 (AMNPVDHPHGGGEGRTGEGQAPVSPWNTLTK) is disordered. The span at 229-239 (DHPHGGGEGRT) shows a compositional bias: basic and acidic residues.

The protein belongs to the universal ribosomal protein uL2 family. Part of the 50S ribosomal subunit. Forms a bridge to the 30S subunit in the 70S ribosome.

In terms of biological role, one of the primary rRNA binding proteins. Required for association of the 30S and 50S subunits to form the 70S ribosome, for tRNA binding and peptide bond formation. It has been suggested to have peptidyltransferase activity; this is somewhat controversial. Makes several contacts with the 16S rRNA in the 70S ribosome. The protein is Large ribosomal subunit protein uL2 of Leptothrix cholodnii (strain ATCC 51168 / LMG 8142 / SP-6) (Leptothrix discophora (strain SP-6)).